A 264-amino-acid chain; its full sequence is S-adenosylmethionine decarboxylase proenzyme (264 aa).

The active-site Schiff-base intermediate with substrate; via pyruvic acid is Ser-114. Ser-114 is subject to Pyruvic acid (Ser); by autocatalysis. His-119 (proton acceptor; for processing activity) is an active-site residue. Cys-142 acts as the Proton donor; for catalytic activity in catalysis.

This sequence belongs to the prokaryotic AdoMetDC family. Type 2 subfamily. In terms of assembly, heterooctamer of four alpha and four beta chains arranged as a tetramer of alpha/beta heterodimers. It depends on pyruvate as a cofactor. Is synthesized initially as an inactive proenzyme. Formation of the active enzyme involves a self-maturation process in which the active site pyruvoyl group is generated from an internal serine residue via an autocatalytic post-translational modification. Two non-identical subunits are generated from the proenzyme in this reaction, and the pyruvate is formed at the N-terminus of the alpha chain, which is derived from the carboxyl end of the proenzyme. The post-translation cleavage follows an unusual pathway, termed non-hydrolytic serinolysis, in which the side chain hydroxyl group of the serine supplies its oxygen atom to form the C-terminus of the beta chain, while the remainder of the serine residue undergoes an oxidative deamination to produce ammonia and the pyruvoyl group blocking the N-terminus of the alpha chain.

The catalysed reaction is S-adenosyl-L-methionine + H(+) = S-adenosyl 3-(methylsulfanyl)propylamine + CO2. It participates in amine and polyamine biosynthesis; S-adenosylmethioninamine biosynthesis; S-adenosylmethioninamine from S-adenosyl-L-methionine: step 1/1. Its function is as follows. Catalyzes the decarboxylation of S-adenosylmethionine to S-adenosylmethioninamine (dcAdoMet), the propylamine donor required for the synthesis of the polyamines spermine and spermidine from the diamine putrescine. This Chromohalobacter salexigens (strain ATCC BAA-138 / DSM 3043 / CIP 106854 / NCIMB 13768 / 1H11) protein is S-adenosylmethionine decarboxylase proenzyme.